The primary structure comprises 220 residues: Artemin (220 aa).

Positions 1–39 (MELGLGGLSTLSHCPWPRQQPALWPTLAALALLSSVAEA) are cleaved as a signal peptide. A propeptide spanning residues 40 to 107 (SLGSAPRSPA…ALPRGGRAAR (68 aa)) is cleaved from the precursor. The interval 41–121 (LGSAPRSPAP…GSRARAAGAR (81 aa)) is disordered. Pro residues-rich tracts occupy residues 47-58 (SPAPREGPPPVL) and 81-98 (PPPQPSRPAPPPPAPPSA). The span at 99–121 (LPRGGRAARAGGPGSRARAAGAR) shows a compositional bias: low complexity. Cystine bridges form between C123/C188, C150/C216, and C154/C218. Residue N202 is glycosylated (N-linked (GlcNAc...) asparagine).

Belongs to the TGF-beta family. GDNF subfamily. In terms of assembly, homodimer; disulfide-linked. Interacts with GFRA3 coreceptor and RET: forms a 2:2:2 ternary complex composed of ARTN ligand, GFRA3 and RET receptor. Ubiquitous. Expressed at high levels in peripheral tissues including prostate, placenta, pancreas, heart, kidney, pituitary gland, lung and testis. Expressed at low levels in the brain.

It localises to the secreted. Growth factor that supports the survival of sensory and sympathetic peripheral neurons in culture and also supports the survival of dopaminergic neurons of the ventral mid-brain. Acts by binding to its coreceptor, GFRA3, leading to autophosphorylation and activation of the RET receptor. Strong attractant of gut hematopoietic cells thus promoting the formation Peyer's patch-like structures, a major component of the gut-associated lymphoid tissue. This Homo sapiens (Human) protein is Artemin.